A 389-amino-acid polypeptide reads, in one-letter code: Lipid-A-disaccharide synthase (389 aa).

The protein belongs to the LpxB family.

It catalyses the reaction a lipid X + a UDP-2-N,3-O-bis[(3R)-3-hydroxyacyl]-alpha-D-glucosamine = a lipid A disaccharide + UDP + H(+). It participates in bacterial outer membrane biogenesis; LPS lipid A biosynthesis. Its function is as follows. Condensation of UDP-2,3-diacylglucosamine and 2,3-diacylglucosamine-1-phosphate to form lipid A disaccharide, a precursor of lipid A, a phosphorylated glycolipid that anchors the lipopolysaccharide to the outer membrane of the cell. The protein is Lipid-A-disaccharide synthase of Burkholderia cenocepacia (strain HI2424).